A 414-amino-acid chain; its full sequence is Chromobox protein homolog 6 (414 aa).

Positions phenylalanine 11–proline 69 constitute a Chromo domain. Serine 107 is modified (phosphoserine). Disordered stretches follow at residues histidine 127–proline 152, alanine 267–tryptophan 308, and alanine 344–serine 365. Residues alanine 267–serine 287 show a composition bias toward low complexity.

In terms of assembly, component of a PRC1-like complex. Distinct PRC1-like core complexes are composed of a RING1 subunit (RING1B or RING1A), one of the six PCGF proteins (PCGF1-6), one PHC protein (PHC1-3) and one of the CBX proteins (CBX2, CBX4, CBX6, CBX7 or CBX8). Interacts with PCGF1, PCGF2, PCGF3, BMI1, PCGF5, PCGF6, RING1 and RNF2. May interact with H3C15 and H3C1. Interacts (via chromodomain) with single-stranded RNA (ssRNA). In terms of processing, ubiquitinated. Ubiquitination regulates the function of the Polycomb group (PcG) multiprotein PRC1-like complex. Deubiquitinated by USP26. Expressed in mouse embryonic stem cells.

Its subcellular location is the nucleus. The protein resides in the chromosome. Component of a Polycomb group (PcG) multiprotein PRC1-like complex, a complex class required to maintain the transcriptionally repressive state of many genes, including Hox genes, throughout development. PcG PRC1 complex acts via chromatin remodeling and modification of histones; it mediates monoubiquitination of histone H2A 'Lys-119', rendering chromatin heritably changed in its expressibility. Possibly contributes to the target selectivity of the PRC1 complex by binding specific regions of chromatin. Recruitment to chromatin might occur in an H3K27me3-independent fashion. May have a PRC1-independent function in embryonic stem cells. The chain is Chromobox protein homolog 6 (Cbx6) from Mus musculus (Mouse).